Consider the following 305-residue polypeptide: ATP synthase subunit gamma, mitochondrial (305 aa).

Belongs to the ATPase gamma chain family. In terms of assembly, F-type ATPases have 2 components, F(1) - the catalytic core - and F(o) - the membrane proton channel. F(1) has five subunits: alpha(3), beta(3), gamma(1), delta(1), epsilon(1), plus the additional subunit P18 (Tb427.05.1710) that is not present in F(1)F(o) ATP synthase from metazoa. Subunit P18 (Tb927.5.1710) interacts with the alpha subunit with a 1:1 stoichiometry; the interaction is direct. Subunit gamma is part of the central stalk. F(o) has three main subunits: a, b and c. The trypanosomal ATPase complex contains additional subunits that are not present in the F(1)F(o) ATP synthase from metazoa.

It localises to the mitochondrion. The protein resides in the mitochondrion inner membrane. Functionally, mitochondrial membrane ATP synthase (F(1)F(o) ATP synthase) produces ATP from ADP in the presence of a proton gradient across the membrane which is generated by electron transport complexes of the respiratory chain. F-type ATPases consist of two structural domains, F(1) - containing the extramembraneous catalytic core, and F(o) - containing the membrane proton channel, linked together by a central stalk and a peripheral stalk. During catalysis, ATP synthesis in the catalytic domain of F(1) is coupled via a rotary mechanism of the central stalk subunits to proton translocation. Subunits alpha and beta form the catalytic core in F(1). Rotation of the central stalk against the surrounding alpha(3)beta(3) subunits leads to hydrolysis of ATP in three separate catalytic sites on the beta subunits. Contrary to the procyclic, insect form that requires F(1)F(o) ATP synthase for ATP synthesis, the bloodstream form relies on ATP hydrolysis by F(1)F(o) ATP synthase to maintain its mitochondrial membrane potential. The chain is ATP synthase subunit gamma, mitochondrial from Trypanosoma brucei brucei.